We begin with the raw amino-acid sequence, 188 residues long: Large ribosomal subunit protein eL18A (188 aa).

Residues 153–188 form a disordered region; that stretch reads GKAPSTPHSRTKPYVLSKGRKFERARGRRASRGYKN. Basic residues predominate over residues 178–188; the sequence is RGRRASRGYKN.

It belongs to the eukaryotic ribosomal protein eL18 family. In terms of assembly, component of the large ribosomal subunit.

The protein localises to the cytoplasm. Its function is as follows. Component of the large ribosomal subunit. The ribosome is a large ribonucleoprotein complex responsible for the synthesis of proteins in the cell. In Xenopus laevis (African clawed frog), this protein is Large ribosomal subunit protein eL18A (rpl18-a).